The sequence spans 694 residues: MATPLKLYRNIGIAAHVDAGKTTTTERVLYYTGMSHKIGEVHDGAATMDWMVQEQERGITITSAATTCYWSGMDKQFESHRINIIDTPGHVDFMIEVERSLRVLDGAVVVFDSVAGVEPQSETVWRQANKYGVPRIVFVNKMDRMGANFLRVVSQIKQRLGSTPVVLQLPIGAEEEFKGVIDLIKMKAIHWDEENKGMTFKYVDIPADLKATCEEYRAHIIEAAAEYSEELMEKYLEGEEFTEAEIKKALRHLTITNKVVPVFCGSAFKNKGVQAVLDGVIEYLPSPTDIPDIQGVDEHGDEIHRKTSYDEPFSALAFKIATDPFVGTLTYFRAYSGILKSGDTVYNSVKGKKERIGRLLQMHANSREEIKEVRAGDIAAAVGLKTVTTGDTLCDQDKVVILERMDFPDPVIAVAVEPKTKADQEKMGIALGKLAQEDPSFRVHTDEESGQTIIQGMGELHLEIIVDRMKREFNVEANVGKPQVAYRETLKQAVEQEGKFVRQSGGRGQYGHVWLKIEPQEPGKGYEFINAIVGGVIPKEYIPAVDKGIQEQMQNGVIAGYPVVDVKVTLFDGSFHEVDSSEMAFKIAGSQCFKQGALKAKPVLLEPIMSVEVVTPEDYMGDVMGDLNRRRGLVQGMEDSPAGKIVRAEVPLAEMFGYSTDLRSATQGRATYTMEFCKYAEAPTNIAEAIIKKQ.

Residues 6–288 enclose the tr-type G domain; the sequence is KLYRNIGIAA…GVIEYLPSPT (283 aa). GTP is bound by residues 15–22, 86–90, and 140–143; these read AHVDAGKT, DTPGH, and NKMD.

This sequence belongs to the TRAFAC class translation factor GTPase superfamily. Classic translation factor GTPase family. EF-G/EF-2 subfamily.

The protein resides in the cytoplasm. Catalyzes the GTP-dependent ribosomal translocation step during translation elongation. During this step, the ribosome changes from the pre-translocational (PRE) to the post-translocational (POST) state as the newly formed A-site-bound peptidyl-tRNA and P-site-bound deacylated tRNA move to the P and E sites, respectively. Catalyzes the coordinated movement of the two tRNA molecules, the mRNA and conformational changes in the ribosome. In Legionella pneumophila (strain Paris), this protein is Elongation factor G.